Here is a 754-residue protein sequence, read N- to C-terminus: 5-methyltetrahydropteroyltriglutamate--homocysteine methyltransferase (754 aa).

Residues 17 to 20 (RELK) and lysine 117 each bind 5-methyltetrahydropteroyltri-L-glutamate. L-homocysteine contacts are provided by residues 431 to 433 (IGS) and glutamate 484. L-methionine is bound by residues 431 to 433 (IGS) and glutamate 484. 5-methyltetrahydropteroyltri-L-glutamate contacts are provided by residues 515–516 (RC) and tryptophan 561. Aspartate 599 is a binding site for L-homocysteine. L-methionine is bound at residue aspartate 599. Glutamate 605 provides a ligand contact to 5-methyltetrahydropteroyltri-L-glutamate. Residues histidine 641, cysteine 643, and glutamate 665 each coordinate Zn(2+). The active-site Proton donor is histidine 694. Cysteine 726 serves as a coordination point for Zn(2+).

The protein belongs to the vitamin-B12 independent methionine synthase family. Requires Zn(2+) as cofactor.

The enzyme catalyses 5-methyltetrahydropteroyltri-L-glutamate + L-homocysteine = tetrahydropteroyltri-L-glutamate + L-methionine. It functions in the pathway amino-acid biosynthesis; L-methionine biosynthesis via de novo pathway; L-methionine from L-homocysteine (MetE route): step 1/1. Its function is as follows. Catalyzes the transfer of a methyl group from 5-methyltetrahydrofolate to homocysteine resulting in methionine formation. The polypeptide is 5-methyltetrahydropteroyltriglutamate--homocysteine methyltransferase (Salmonella paratyphi A (strain ATCC 9150 / SARB42)).